The chain runs to 287 residues: Bifunctional protein FolD (287 aa).

NADP(+)-binding positions include 165 to 167 (GRG), Thr-192, and Val-233.

Belongs to the tetrahydrofolate dehydrogenase/cyclohydrolase family. In terms of assembly, homodimer.

It catalyses the reaction (6R)-5,10-methylene-5,6,7,8-tetrahydrofolate + NADP(+) = (6R)-5,10-methenyltetrahydrofolate + NADPH. It carries out the reaction (6R)-5,10-methenyltetrahydrofolate + H2O = (6R)-10-formyltetrahydrofolate + H(+). It functions in the pathway one-carbon metabolism; tetrahydrofolate interconversion. Functionally, catalyzes the oxidation of 5,10-methylenetetrahydrofolate to 5,10-methenyltetrahydrofolate and then the hydrolysis of 5,10-methenyltetrahydrofolate to 10-formyltetrahydrofolate. The sequence is that of Bifunctional protein FolD from Cutibacterium acnes (strain DSM 16379 / KPA171202) (Propionibacterium acnes).